Here is a 543-residue protein sequence, read N- to C-terminus: Hydroxylamine reductase (543 aa).

Residues Cys-5, Cys-8, Cys-17, and Cys-23 each contribute to the [4Fe-4S] cluster site. The hybrid [4Fe-2O-2S] cluster site is built by His-236, Glu-260, Cys-304, Cys-398, Cys-426, Cys-451, Glu-486, and Lys-488. A Cysteine persulfide modification is found at Cys-398.

Belongs to the HCP family. [4Fe-4S] cluster is required as a cofactor. Hybrid [4Fe-2O-2S] cluster serves as cofactor.

The protein localises to the cytoplasm. The catalysed reaction is A + NH4(+) + H2O = hydroxylamine + AH2 + H(+). In terms of biological role, catalyzes the reduction of hydroxylamine to form NH(3) and H(2)O. This is Hydroxylamine reductase from Bacteroides fragilis (strain ATCC 25285 / DSM 2151 / CCUG 4856 / JCM 11019 / LMG 10263 / NCTC 9343 / Onslow / VPI 2553 / EN-2).